We begin with the raw amino-acid sequence, 119 residues long: Immunoglobulin heavy variable 2-70D (119 aa).

The first 19 residues, 1–19, serve as a signal peptide directing secretion; it reads MDILCSTLLLLTVPSWVLS. Q20 bears the Pyrrolidone carboxylic acid mark. A framework-1 region spans residues 20-44; that stretch reads QVTLKESGPALVKPTQTLTLTCTFS. Residues 20-119 form the Ig-like domain; the sequence is QVTLKESGPA…DTATYYCARI (100 aa). C41 and C116 are disulfide-bonded. Positions 45–54 are complementarity-determining-1; the sequence is GFSLSTSGMR. The interval 55–71 is framework-2; the sequence is VSWIRQPPGKALEWLAR. Residues 72–78 form a complementarity-determining-2 region; it reads IDWDDDK. Positions 79 to 116 are framework-3; sequence FYSTSLKTRLTISKDTSKNQVVLTMTNMDPVDTATYYC. The segment at 117-119 is complementarity-determining-3; sequence ARI.

As to quaternary structure, immunoglobulins are composed of two identical heavy chains and two identical light chains; disulfide-linked.

It localises to the secreted. Its subcellular location is the cell membrane. Functionally, v region of the variable domain of immunoglobulin heavy chains that participates in the antigen recognition. Immunoglobulins, also known as antibodies, are membrane-bound or secreted glycoproteins produced by B lymphocytes. In the recognition phase of humoral immunity, the membrane-bound immunoglobulins serve as receptors which, upon binding of a specific antigen, trigger the clonal expansion and differentiation of B lymphocytes into immunoglobulins-secreting plasma cells. Secreted immunoglobulins mediate the effector phase of humoral immunity, which results in the elimination of bound antigens. The antigen binding site is formed by the variable domain of one heavy chain, together with that of its associated light chain. Thus, each immunoglobulin has two antigen binding sites with remarkable affinity for a particular antigen. The variable domains are assembled by a process called V-(D)-J rearrangement and can then be subjected to somatic hypermutations which, after exposure to antigen and selection, allow affinity maturation for a particular antigen. This Homo sapiens (Human) protein is Immunoglobulin heavy variable 2-70D.